Consider the following 26-residue polypeptide: Morintide mO4 (26 aa).

Residues 1-26 (NRLCCSQYGFCGTTSEYCSRVSGCQS) enclose the Chitin-binding type-1 domain. Cys4 and Cys18 are oxidised to a cystine.

In terms of tissue distribution, seeds (at protein level).

Its function is as follows. Chitin-binding protein which functions in defense against chitin-containing fungal pathogens. The sequence is that of Morintide mO4 from Moringa oleifera (Horseradish tree).